The primary structure comprises 545 residues: MSKYIFVTGGVLSSLGKGITSASIATLLQHSGFKVSMVKIDPYINVDPGTMSPFEHGEVFVTEDGAETDLDIGNYERFLNTNLGKKNNFTTGQIYLSVIEKERRGDYLGKTVQIIPHITDEIKRRIKEVAKDVDIVVVELGGTVGDIEGLPFLEAVRQLKHEVGKTNAMFVHVTLIPYIKAAGELKTKPTQHSVQELRRIGITPHMLVCRTEKPLPKALKEKLADSCDIERDAVIEAVDAPTVYQVPLNFLNQDILVPIAKQLDLGDLHPDMTEWNFIVKKIISPQKSVKIAFVGKYLQLKESYKSLIEALIHSGAHLDMKVDIEWIDSEDLEKADDEKLDEIFNEVSGILVAGGFGERGVEGKLKAIKYARENKIPYLGICLGMQLAVIEFARNVLGLEYANSQEFDPDTPEPVVYLIDEFIDASGQKQLRTHKSPLGGTMRLGGYECFVKKGTKLYDAYKSDKVIERHRHRYEVNGAYEDALKEKGMIVSGKSVEGLVEAVELKDHPWFVAVQFHPEFTNKLKSPNKVIMSFVENAYKCQRSC.

Positions 1-265 (MSKYIFVTGG…LVPIAKQLDL (265 aa)) are amidoligase domain. Ser-13 provides a ligand contact to CTP. Residue Ser-13 coordinates UTP. Residues 14-19 (SLGKGI) and Asp-71 each bind ATP. Asp-71 and Glu-139 together coordinate Mg(2+). CTP contacts are provided by residues 146–148 (DIE), 186–191 (KTKPTQ), and Lys-222. UTP is bound by residues 186-191 (KTKPTQ) and Lys-222. Residues 290 to 544 (KIAFVGKYLQ…VENAYKCQRS (255 aa)) enclose the Glutamine amidotransferase type-1 domain. Residue Gly-355 coordinates L-glutamine. The active-site Nucleophile; for glutamine hydrolysis is the Cys-382. Residues 383–386 (LGMQ), Glu-406, and Arg-473 contribute to the L-glutamine site. Catalysis depends on residues His-517 and Glu-519.

It belongs to the CTP synthase family. Homotetramer.

It carries out the reaction UTP + L-glutamine + ATP + H2O = CTP + L-glutamate + ADP + phosphate + 2 H(+). The catalysed reaction is L-glutamine + H2O = L-glutamate + NH4(+). The enzyme catalyses UTP + NH4(+) + ATP = CTP + ADP + phosphate + 2 H(+). It participates in pyrimidine metabolism; CTP biosynthesis via de novo pathway; CTP from UDP: step 2/2. Its activity is regulated as follows. Allosterically activated by GTP, when glutamine is the substrate; GTP has no effect on the reaction when ammonia is the substrate. The allosteric effector GTP functions by stabilizing the protein conformation that binds the tetrahedral intermediate(s) formed during glutamine hydrolysis. Inhibited by the product CTP, via allosteric rather than competitive inhibition. Functionally, catalyzes the ATP-dependent amination of UTP to CTP with either L-glutamine or ammonia as the source of nitrogen. Regulates intracellular CTP levels through interactions with the four ribonucleotide triphosphates. This chain is CTP synthase, found in Nautilia profundicola (strain ATCC BAA-1463 / DSM 18972 / AmH).